A 186-amino-acid polypeptide reads, in one-letter code: Apolipophorin-3 (186 aa).

The N-terminal stretch at 1–18 (MAAKYVFVVAACSALAQA) is a signal peptide. The propeptide occupies 19–23 (GIVRR).

The protein belongs to the insect apolipophorin-3 family. In terms of assembly, equilibrium between a soluble monomer and a bound lipoprotein form. Apolipophorin-3 associates with lipophorin during lipid loading until each particle contains 9 or 14 molecules of apolipophorin-3. Expressed in hemolymph. Also found in hemocytes and fat body.

The protein localises to the secreted. Functionally, assists in the loading of diacylglycerol, generated from triacylglycerol stores in the fat body through the action of adipokinetic hormone, into lipophorin, the hemolymph lipoprotein. It increases the lipid carrying capacity of lipophorin by covering the expanding hydrophobic surface resulting from diacylglycerol uptake. It thus plays a critical role in the transport of lipids during flight in several species of insects. Has antibacterial activity against the Gram-positive bacteria L.monocytogenes (MIC=6.5 uM). Lacks antibacterial activity against the Gram-positive bacteria B.circulans, M.luteus, S.aureus, and S.lutea, and the Gram-negative bacteria E.coli D31, E.coli ATCC 25922, and S.typhimurium. Lacks antifungal activity against S.cerevisiae, P.pastoris, Z.marxianus, C.albicans, C.wickerhamii, A.niger, F.oxysporum, and T.harizianum. This Galleria mellonella (Greater wax moth) protein is Apolipophorin-3.